Consider the following 311-residue polypeptide: Methionyl-tRNA formyltransferase (311 aa).

A disordered region spans residues 33–52 (RPDRPAGRGRHQRSSPVREL). (6S)-5,6,7,8-tetrahydrofolate is bound at residue 110–113 (SLLP).

It belongs to the Fmt family.

The catalysed reaction is L-methionyl-tRNA(fMet) + (6R)-10-formyltetrahydrofolate = N-formyl-L-methionyl-tRNA(fMet) + (6S)-5,6,7,8-tetrahydrofolate + H(+). Functionally, attaches a formyl group to the free amino group of methionyl-tRNA(fMet). The formyl group appears to play a dual role in the initiator identity of N-formylmethionyl-tRNA by promoting its recognition by IF2 and preventing the misappropriation of this tRNA by the elongation apparatus. The sequence is that of Methionyl-tRNA formyltransferase from Parafrankia sp. (strain EAN1pec).